The following is a 339-amino-acid chain: Carboxyvinyl-carboxyphosphonate phosphorylmutase, chloroplastic (339 aa).

The transit peptide at 1–30 (MSMLMAVKTTSLCCSSLNLTASPTFRRNPR) directs the protein to the chloroplast.

Belongs to the isocitrate lyase/PEP mutase superfamily.

The protein resides in the plastid. It localises to the chloroplast. The catalysed reaction is 1-carboxyvinyl carboxyphosphonate + H(+) = 3-(hydrohydroxyphosphoryl)pyruvate + CO2. The sequence is that of Carboxyvinyl-carboxyphosphonate phosphorylmutase, chloroplastic from Arabidopsis thaliana (Mouse-ear cress).